We begin with the raw amino-acid sequence, 79 residues long: uncharacterized protein (79 aa).

It is found in the mitochondrion. This is an uncharacterized protein from Marchantia polymorpha (Common liverwort).